Reading from the N-terminus, the 221-residue chain is Vesicle-associated membrane protein 722 (221 aa).

Residues 1 to 196 (MAQQSLIYSF…MWFQNMKIKL (196 aa)) are Cytoplasmic-facing. A Longin domain is found at 10–114 (FVARGTVILV…SLNKEFGSKL (105 aa)). The region spanning 130-190 (KLAKVKAQVS…TQMRRKMWFQ (61 aa)) is the v-SNARE coiled-coil homology domain. A helical; Anchor for type IV membrane protein membrane pass occupies residues 197–217 (IVLAIIIALILIIILSICGGF). Topologically, residues 218-221 (NCGK) are vesicular.

This sequence belongs to the synaptobrevin family. In terms of tissue distribution, highly expressed in stems and roots. Detected in flowers and leaves.

The protein resides in the cell membrane. Its subcellular location is the early endosome membrane. Involved in the targeting and/or fusion of transport vesicles to their target membrane. This chain is Vesicle-associated membrane protein 722, found in Arabidopsis thaliana (Mouse-ear cress).